A 149-amino-acid chain; its full sequence is Arginine repressor (149 aa).

The protein belongs to the ArgR family.

The protein localises to the cytoplasm. Its pathway is amino-acid biosynthesis; L-arginine biosynthesis [regulation]. In terms of biological role, regulates arginine biosynthesis genes. This chain is Arginine repressor, found in Chlorobium phaeobacteroides (strain DSM 266 / SMG 266 / 2430).